The chain runs to 237 residues: LexA repressor (237 aa).

The H-T-H motif DNA-binding region spans 26-46 (FDEMKDALDLRSKSGIHRLIT). Active-site for autocatalytic cleavage activity residues include S158 and K196.

It belongs to the peptidase S24 family. As to quaternary structure, homodimer.

It catalyses the reaction Hydrolysis of Ala-|-Gly bond in repressor LexA.. In terms of biological role, represses a number of genes involved in the response to DNA damage (SOS response), including recA and lexA. In the presence of single-stranded DNA, RecA interacts with LexA causing an autocatalytic cleavage which disrupts the DNA-binding part of LexA, leading to derepression of the SOS regulon and eventually DNA repair. The sequence is that of LexA repressor from Rhodopseudomonas palustris (strain BisA53).